Reading from the N-terminus, the 102-residue chain is Small ribosomal subunit protein uS10 (102 aa).

This sequence belongs to the universal ribosomal protein uS10 family. Part of the 30S ribosomal subunit.

In terms of biological role, involved in the binding of tRNA to the ribosomes. In Streptococcus pneumoniae (strain CGSP14), this protein is Small ribosomal subunit protein uS10.